The primary structure comprises 597 residues: Arginine--tRNA ligase (597 aa).

A 'HIGH' region motif is present at residues 125–135 (PNTNKPLHLGH).

The protein belongs to the class-I aminoacyl-tRNA synthetase family. Monomer.

It is found in the cytoplasm. It catalyses the reaction tRNA(Arg) + L-arginine + ATP = L-arginyl-tRNA(Arg) + AMP + diphosphate. The polypeptide is Arginine--tRNA ligase (Bacteroides thetaiotaomicron (strain ATCC 29148 / DSM 2079 / JCM 5827 / CCUG 10774 / NCTC 10582 / VPI-5482 / E50)).